Consider the following 388-residue polypeptide: MKNREYQQIDPQALATPTPTPPPRSLPEHKPRRARRKWEVFPGKNRFYCDGRIIVARQSGVLPLTLGLILLTSGLFFIFDCPFLVKHLTSCIPAIGGVLFVFVIISLLQTSFTDPGILPRATPEEAADIEKQIDNPTGSSSSYRPPPRTKEVVINQQVVKLKYCFTCKIFRPPRTSHCSLCDNCVERFDHHCPWVGNCVGKRNYRFFYTFIVSLSFLTAFIFGCVTTHLALRSQGGNGLVNALQSSPASALELVVCFFSVWSILGLSGFHTYLVAANLTTNEDIKGSWSGKSGNEDVGNPYSYNSMIKNCCSVLCGPMPPSLIDRRGFVPSDDSVQTSPVEIELPAAKNDINMVGRAVTSGRPPPPPPPPLVVTLQQPAISMQNHSTA.

The disordered stretch occupies residues 1-33; that stretch reads MKNREYQQIDPQALATPTPTPPPRSLPEHKPRR. Residues 1–58 are Cytoplasmic-facing; it reads MKNREYQQIDPQALATPTPTPPPRSLPEHKPRRARRKWEVFPGKNRFYCDGRIIVARQ. Residues 59 to 79 form a helical membrane-spanning segment; sequence SGVLPLTLGLILLTSGLFFIF. The Lumenal segment spans residues 80–87; the sequence is DCPFLVKH. The helical transmembrane segment at 88–108 threads the bilayer; the sequence is LTSCIPAIGGVLFVFVIISLL. Residues 109–205 are Cytoplasmic-facing; it reads QTSFTDPGIL…GNCVGKRNYR (97 aa). One can recognise a DHHC domain in the interval 162-212; that stretch reads KYCFTCKIFRPPRTSHCSLCDNCVERFDHHCPWVGNCVGKRNYRFFYTFIV. Cys192 (S-palmitoyl cysteine intermediate) is an active-site residue. A helical membrane pass occupies residues 206-226; that stretch reads FFYTFIVSLSFLTAFIFGCVT. Topologically, residues 227-253 are lumenal; it reads THLALRSQGGNGLVNALQSSPASALEL. Residues 254–274 traverse the membrane as a helical segment; that stretch reads VVCFFSVWSILGLSGFHTYLV. At 275-388 the chain is on the cytoplasmic side; sequence AANLTTNEDI…AISMQNHSTA (114 aa).

This sequence belongs to the DHHC palmitoyltransferase family. ERF2/ZDHHC9 subfamily.

It is found in the golgi apparatus membrane. The catalysed reaction is L-cysteinyl-[protein] + hexadecanoyl-CoA = S-hexadecanoyl-L-cysteinyl-[protein] + CoA. Functionally, palmitoyltransferase that catalyzes the addition of palmitate onto various protein substrates, such as CGAS, HRAS and LCK. The chain is Palmitoyltransferase ZDHHC18-B from Danio rerio (Zebrafish).